We begin with the raw amino-acid sequence, 440 residues long: Trigger factor (440 aa).

One can recognise a PPIase FKBP-type domain in the interval 163-248 (GDILTVDFLG…AKALKRRVAP (86 aa)).

The protein belongs to the FKBP-type PPIase family. Tig subfamily.

The protein resides in the cytoplasm. The enzyme catalyses [protein]-peptidylproline (omega=180) = [protein]-peptidylproline (omega=0). Its function is as follows. Involved in protein export. Acts as a chaperone by maintaining the newly synthesized protein in an open conformation. Functions as a peptidyl-prolyl cis-trans isomerase. In Acidiphilium cryptum (strain JF-5), this protein is Trigger factor.